The sequence spans 201 residues: Peptidyl-tRNA hydrolase (201 aa).

Tyr15 contacts tRNA. The active-site Proton acceptor is the His20. 3 residues coordinate tRNA: Tyr66, Asn68, and Asn114.

The protein belongs to the PTH family. As to quaternary structure, monomer.

The protein localises to the cytoplasm. It catalyses the reaction an N-acyl-L-alpha-aminoacyl-tRNA + H2O = an N-acyl-L-amino acid + a tRNA + H(+). Hydrolyzes ribosome-free peptidyl-tRNAs (with 1 or more amino acids incorporated), which drop off the ribosome during protein synthesis, or as a result of ribosome stalling. Functionally, catalyzes the release of premature peptidyl moieties from peptidyl-tRNA molecules trapped in stalled 50S ribosomal subunits, and thus maintains levels of free tRNAs and 50S ribosomes. The chain is Peptidyl-tRNA hydrolase from Burkholderia mallei (strain ATCC 23344).